The sequence spans 189 residues: Pyridoxal 5'-phosphate synthase subunit PdxT (189 aa).

L-glutamine is bound at residue 47-49 (GES). Cys79 (nucleophile) is an active-site residue. L-glutamine-binding positions include Arg105 and 132 to 133 (IR). Active-site charge relay system residues include His168 and Glu170.

The protein belongs to the glutaminase PdxT/SNO family. In the presence of PdxS, forms a dodecamer of heterodimers. Only shows activity in the heterodimer.

The catalysed reaction is aldehydo-D-ribose 5-phosphate + D-glyceraldehyde 3-phosphate + L-glutamine = pyridoxal 5'-phosphate + L-glutamate + phosphate + 3 H2O + H(+). It catalyses the reaction L-glutamine + H2O = L-glutamate + NH4(+). It functions in the pathway cofactor biosynthesis; pyridoxal 5'-phosphate biosynthesis. Functionally, catalyzes the hydrolysis of glutamine to glutamate and ammonia as part of the biosynthesis of pyridoxal 5'-phosphate. The resulting ammonia molecule is channeled to the active site of PdxS. The polypeptide is Pyridoxal 5'-phosphate synthase subunit PdxT (Methanocorpusculum labreanum (strain ATCC 43576 / DSM 4855 / Z)).